Consider the following 802-residue polypeptide: Acetyl-CoA decarbonylase/synthase complex subunit alpha (802 aa).

Cysteine 69, cysteine 72, cysteine 73, cysteine 75, cysteine 80, and cysteine 90 together coordinate [4Fe-4S] cluster. Position 113 (histidine 113) interacts with CO. Positions 246, 274, and 319 each coordinate [Ni-4Fe-4S] cluster. 2 4Fe-4S ferredoxin-type domains span residues 404–432 (EELK…ISEA) and 442–473 (SKFE…VIEK). Positions 413, 416, 419, 423, 451, 454, 457, and 461 each coordinate [4Fe-4S] cluster. Positions 519, 548, and 583 each coordinate [Ni-4Fe-4S] cluster.

This sequence belongs to the Ni-containing carbon monoxide dehydrogenase family. In terms of assembly, heterotetramer of two alpha and two epsilon subunits. The ACDS complex is made up of alpha, epsilon, beta, gamma and delta subunits with a probable stoichiometry of (alpha(2)epsilon(2))(4)-beta(8)-(gamma(1)delta(1))(8). Requires [4Fe-4S] cluster as cofactor. The cofactor is [Ni-4Fe-4S] cluster.

It carries out the reaction CO + 2 oxidized [2Fe-2S]-[ferredoxin] + H2O = 2 reduced [2Fe-2S]-[ferredoxin] + CO2 + 2 H(+). The protein operates within one-carbon metabolism; methanogenesis from acetate. Functionally, part of the ACDS complex that catalyzes the reversible cleavage of acetyl-CoA, allowing growth on acetate as sole source of carbon and energy. The alpha-epsilon subcomponent functions as a carbon monoxide dehydrogenase. The protein is Acetyl-CoA decarbonylase/synthase complex subunit alpha of Methanococcoides burtonii (strain DSM 6242 / NBRC 107633 / OCM 468 / ACE-M).